Here is a 193-residue protein sequence, read N- to C-terminus: Molybdenum cofactor guanylyltransferase (193 aa).

Residues 8 to 10 (LAG), K21, D67, and D98 each bind GTP. Mg(2+) is bound at residue D98.

This sequence belongs to the MobA family. As to quaternary structure, monomer. Requires Mg(2+) as cofactor.

The protein localises to the cytoplasm. The enzyme catalyses Mo-molybdopterin + GTP + H(+) = Mo-molybdopterin guanine dinucleotide + diphosphate. Transfers a GMP moiety from GTP to Mo-molybdopterin (Mo-MPT) cofactor (Moco or molybdenum cofactor) to form Mo-molybdopterin guanine dinucleotide (Mo-MGD) cofactor. This chain is Molybdenum cofactor guanylyltransferase, found in Cereibacter sphaeroides (strain ATCC 17023 / DSM 158 / JCM 6121 / CCUG 31486 / LMG 2827 / NBRC 12203 / NCIMB 8253 / ATH 2.4.1.) (Rhodobacter sphaeroides).